The primary structure comprises 708 residues: Soluble guanylate cyclase gcy-37 (708 aa).

Histidine 105 contacts heme. Positions 368–409 form a coiled coil; it reads LNQSRICQMELNKKLEETMKKMKKMTEELEVKKSQTDRLLFE. The Guanylate cyclase domain occupies 434 to 562; sequence SVIFTDIPDF…NTVNVTKSIC (129 aa). Mg(2+) contacts are provided by aspartate 439 and aspartate 483.

The protein belongs to the adenylyl cyclase class-4/guanylyl cyclase family. As to quaternary structure, heterodimer; with other soluble guanylate cyclases. It depends on heme as a cofactor. In terms of tissue distribution, expressed in a small number of neurons, corresponding to URX, AQR and PQR neurons.

Its subcellular location is the cytoplasm. The catalysed reaction is GTP = 3',5'-cyclic GMP + diphosphate. With respect to regulation, may be regulated by molecular oxygen. Probably not activated by nitric oxide (NO). In terms of biological role, synthesizes cyclic GMP (cGMP) from GTP. May play a role in sensory neurons. This chain is Soluble guanylate cyclase gcy-37 (gcy-37), found in Caenorhabditis elegans.